The primary structure comprises 379 residues: Lipoyl synthase 1, mitochondrial (379 aa).

The [4Fe-4S] cluster site is built by Cys-106, Cys-111, Cys-117, Cys-137, Cys-141, Cys-144, and Ser-352. The 220-residue stretch at 122 to 341 (EHGTQTATIM…EERGNELGFL (220 aa)) folds into the Radical SAM core domain.

It belongs to the radical SAM superfamily. Lipoyl synthase family. The cofactor is [4Fe-4S] cluster.

The protein resides in the mitochondrion. The enzyme catalyses [[Fe-S] cluster scaffold protein carrying a second [4Fe-4S](2+) cluster] + N(6)-octanoyl-L-lysyl-[protein] + 2 oxidized [2Fe-2S]-[ferredoxin] + 2 S-adenosyl-L-methionine + 4 H(+) = [[Fe-S] cluster scaffold protein] + N(6)-[(R)-dihydrolipoyl]-L-lysyl-[protein] + 4 Fe(3+) + 2 hydrogen sulfide + 2 5'-deoxyadenosine + 2 L-methionine + 2 reduced [2Fe-2S]-[ferredoxin]. The protein operates within protein modification; protein lipoylation via endogenous pathway; protein N(6)-(lipoyl)lysine from octanoyl-[acyl-carrier-protein]: step 2/2. Its function is as follows. Catalyzes the radical-mediated insertion of two sulfur atoms into the C-6 and C-8 positions of the octanoyl moiety bound to the lipoyl domains of lipoate-dependent enzymes, thereby converting the octanoylated domains into lipoylated derivatives. This is Lipoyl synthase 1, mitochondrial from Drosophila yakuba (Fruit fly).